Consider the following 215-residue polypeptide: tRNA (guanine-N(7)-)-methyltransferase (215 aa).

Positions 44, 69, 96, and 118 each coordinate S-adenosyl-L-methionine. D118 is an active-site residue. Residue K122 coordinates substrate. Positions 124–129 are interaction with RNA; it reads RHEKRR. Substrate contacts are provided by residues D154 and 192-195; that span reads TEYE.

This sequence belongs to the class I-like SAM-binding methyltransferase superfamily. TrmB family.

It catalyses the reaction guanosine(46) in tRNA + S-adenosyl-L-methionine = N(7)-methylguanosine(46) in tRNA + S-adenosyl-L-homocysteine. The protein operates within tRNA modification; N(7)-methylguanine-tRNA biosynthesis. In terms of biological role, catalyzes the formation of N(7)-methylguanine at position 46 (m7G46) in tRNA. The sequence is that of tRNA (guanine-N(7)-)-methyltransferase from Limosilactobacillus fermentum (strain NBRC 3956 / LMG 18251) (Lactobacillus fermentum).